An 87-amino-acid chain; its full sequence is U3-theraphotoxin-Hhn1a 3 (87 aa).

A signal peptide spans 1-24 (MVNMKASMFLTFAGLVLLFVVCYA). Residues 25 to 52 (PESEEKEFPKEMLSSIFAVDNDFKQEER) constitute a propeptide that is removed on maturation. Cystine bridges form between C54/C67, C61/C72, and C66/C79.

It belongs to the neurotoxin 10 (Hwtx-1) family. 51 (Hntx-8) subfamily. Hntx-8 sub-subfamily. In terms of tissue distribution, expressed by the venom gland.

The protein resides in the secreted. Its function is as follows. Ion channel inhibitor. The chain is U3-theraphotoxin-Hhn1a 3 from Cyriopagopus hainanus (Chinese bird spider).